The sequence spans 856 residues: DNA mismatch repair protein MutS (856 aa).

ATP is bound at residue 600–607; sequence GPNMSGKS.

The protein belongs to the DNA mismatch repair MutS family.

This protein is involved in the repair of mismatches in DNA. It is possible that it carries out the mismatch recognition step. This protein has a weak ATPase activity. This chain is DNA mismatch repair protein MutS, found in Lactobacillus acidophilus (strain ATCC 700396 / NCK56 / N2 / NCFM).